Here is a 105-residue protein sequence, read N- to C-terminus: Small ribosomal subunit protein uS10c (105 aa).

Belongs to the universal ribosomal protein uS10 family. In terms of assembly, part of the 30S ribosomal subunit.

Its subcellular location is the plastid. It localises to the chloroplast. Involved in the binding of tRNA to the ribosomes. This chain is Small ribosomal subunit protein uS10c, found in Gracilaria tenuistipitata var. liui (Red alga).